We begin with the raw amino-acid sequence, 501 residues long: Suppressor of hairless protein homolog (501 aa).

DNA-binding stretches follow at residues 58-68 (QKSYGNEKRFF), 166-171 (SKPSKK), and 193-198 (RLRSQT). An IPT/TIG domain is found at 356-446 (PVVESLQLNG…YSTSLTFTYT (91 aa)).

This sequence belongs to the Su(H) family. As to quaternary structure, interacts with activated Notch proteins. Forms a ternary complex with nrarp and the intracellular domain (NICD) of notch1. Interacts with rita1, leading to nuclear export, prevent the interaction between rbpj and NICD product and subsequent down-regulation of the Notch signaling pathway.

The protein localises to the nucleus. The protein resides in the cytoplasm. Transcriptional regulator that plays a central role in Notch signaling, a signaling pathway involved in cell-cell communication that regulates a broad spectrum of cell-fate determinations. Acts as a transcriptional repressor when it is not associated with Notch proteins. When associated with some NICD product of Notch proteins (Notch intracellular domain), it acts as a transcriptional activator that activates transcription of Notch target genes. Required for the transcriptional activation of ESR1, suggesting that it is required during primary neurogenesis in embryos. Binds to the oxygen responsive element of COX4I2 and activates its transcription under hypoxia conditions (4% oxygen). This chain is Suppressor of hairless protein homolog (rbpj), found in Xenopus laevis (African clawed frog).